The chain runs to 127 residues: Fluoride-specific ion channel FluC (127 aa).

Helical transmembrane passes span 4–24 (LLLA…FLSM), 35–55 (LGTL…LAWF), 71–91 (TGFC…VFLL), and 103–123 (IAVN…LFSA). Na(+)-binding residues include Gly75 and Thr78.

This sequence belongs to the fluoride channel Fluc/FEX (TC 1.A.43) family.

The protein resides in the cell inner membrane. The catalysed reaction is fluoride(in) = fluoride(out). Na(+) is not transported, but it plays an essential structural role and its presence is essential for fluoride channel function. Fluoride-specific ion channel. Important for reducing fluoride concentration in the cell, thus reducing its toxicity. This is Fluoride-specific ion channel FluC from Enterobacter sp. (strain 638).